The sequence spans 68 residues: Prokaryotic ubiquitin-like protein Pup (68 aa).

The disordered stretch occupies residues 1 to 37 (MAQERIFGTGSRREDEPDTPAPVDPPVSGAAQAQRDM). An ARC ATPase binding region spans residues 24–62 (DPPVSGAAQAQRDMQGTDDLLAEIDGVLETNAEAFVKGF). Position 68 is a deamidated glutamine (Gln68). Residue Gln68 forms an Isoglutamyl lysine isopeptide (Gln-Lys) (interchain with K-? in acceptor proteins) linkage.

It belongs to the prokaryotic ubiquitin-like protein family. Strongly interacts with the proteasome-associated ATPase ARC through a hydrophobic interface; the interacting region of Pup lies in its C-terminal half. There is one Pup binding site per ARC hexamer ring. Post-translationally, is modified by deamidation of its C-terminal glutamine to glutamate by the deamidase Dop, a prerequisite to the subsequent pupylation process.

Its pathway is protein degradation; proteasomal Pup-dependent pathway. Its function is as follows. Protein modifier that is covalently attached to lysine residues of substrate proteins, thereby targeting them for proteasomal degradation. The tagging system is termed pupylation. This chain is Prokaryotic ubiquitin-like protein Pup, found in Kocuria rhizophila (strain ATCC 9341 / DSM 348 / NBRC 103217 / DC2201).